A 269-amino-acid polypeptide reads, in one-letter code: Shikimate dehydrogenase (NADP(+)) (269 aa).

Shikimate is bound by residues 17 to 19 (SKS) and T64. K68 acts as the Proton acceptor in catalysis. D80 provides a ligand contact to NADP(+). 2 residues coordinate shikimate: N89 and D105. NADP(+)-binding positions include 130 to 134 (GAGGA), 154 to 159 (NRTRAK), and M213. Residue Y215 participates in shikimate binding. NADP(+) is bound at residue G237.

The protein belongs to the shikimate dehydrogenase family. In terms of assembly, homodimer.

The enzyme catalyses shikimate + NADP(+) = 3-dehydroshikimate + NADPH + H(+). It functions in the pathway metabolic intermediate biosynthesis; chorismate biosynthesis; chorismate from D-erythrose 4-phosphate and phosphoenolpyruvate: step 4/7. Functionally, involved in the biosynthesis of the chorismate, which leads to the biosynthesis of aromatic amino acids. Catalyzes the reversible NADPH linked reduction of 3-dehydroshikimate (DHSA) to yield shikimate (SA). The protein is Shikimate dehydrogenase (NADP(+)) of Neisseria meningitidis serogroup C (strain 053442).